The primary structure comprises 318 residues: Nuclear egress protein 1 (318 aa).

The segment at 129-239 (CLRLSPFGHS…HLLLQGTSLH (111 aa)) adopts a CCCH-type zinc-finger fold.

The protein belongs to the herpesviridae NEC1 protein family. As to quaternary structure, forms a heterodimeric viral nuclear egress complex (NEC) with NEC2. Interacts with capsid vertex specific component 2/CVC2; this interaction directs the capsid to the host inner nuclear membrane to initiate budding. In terms of processing, phosphorylated at serine residues in the N-terminus. This phosphorylation regulates the localization within the inner nuclear membrane.

Its subcellular location is the host nucleus inner membrane. Its function is as follows. Plays an essential role in virion nuclear egress, the first step of virion release from infected cell. Within the host nucleus, NEC1 interacts with the newly formed capsid through the vertexes and directs it to the inner nuclear membrane by associating with NEC2. Induces the budding of the capsid at the inner nuclear membrane as well as its envelopment into the perinuclear space. There, the NEC1/NEC2 complex promotes the fusion of the enveloped capsid with the outer nuclear membrane and the subsequent release of the viral capsid into the cytoplasm where it will reach the secondary budding sites in the host Golgi or trans-Golgi network. This Homo sapiens (Human) protein is Nuclear egress protein 1.